The following is a 408-amino-acid chain: uncharacterized protein (408 aa).

The protein belongs to the protein kinase superfamily. ADCK protein kinase family.

This is an uncharacterized protein from Synechocystis sp. (strain ATCC 27184 / PCC 6803 / Kazusa).